Consider the following 277-residue polypeptide: Shikimate dehydrogenase (NADP(+)) (277 aa).

Residues 17-19 (SRS) and threonine 64 each bind shikimate. Lysine 68 functions as the Proton acceptor in the catalytic mechanism. Shikimate contacts are provided by asparagine 88 and aspartate 103. NADP(+) is bound by residues 128–132 (GAGGS), 152–157 (NRTLDR), and leucine 217. Residue tyrosine 219 participates in shikimate binding. Residue glycine 240 coordinates NADP(+).

It belongs to the shikimate dehydrogenase family. As to quaternary structure, homodimer.

It carries out the reaction shikimate + NADP(+) = 3-dehydroshikimate + NADPH + H(+). It participates in metabolic intermediate biosynthesis; chorismate biosynthesis; chorismate from D-erythrose 4-phosphate and phosphoenolpyruvate: step 4/7. Its function is as follows. Involved in the biosynthesis of the chorismate, which leads to the biosynthesis of aromatic amino acids. Catalyzes the reversible NADPH linked reduction of 3-dehydroshikimate (DHSA) to yield shikimate (SA). The sequence is that of Shikimate dehydrogenase (NADP(+)) from Rhodopseudomonas palustris (strain BisB18).